The primary structure comprises 389 residues: Acyl-[acyl-carrier-protein] dehydrogenase MbtN (389 aa).

This sequence belongs to the acyl-CoA dehydrogenase family. FAD serves as cofactor.

It functions in the pathway siderophore biosynthesis; mycobactin biosynthesis. Its function is as follows. Catalyzes the dehydrogenation at the alpha-beta position of ACP-bound acyl chains. This results in the introduction of a double bond in the lipidic chain, which is further transferred to the epsilon-amino group of lysine residue in the mycobactin core by MbtK. The protein is Acyl-[acyl-carrier-protein] dehydrogenase MbtN (mbtN) of Mycobacterium sp. (strain MCS).